Here is a 544-residue protein sequence, read N- to C-terminus: Chaperonin GroEL (544 aa).

ATP contacts are provided by residues 29–32 (TLGP), lysine 50, 86–90 (DGTTT), glycine 415, and aspartate 495.

This sequence belongs to the chaperonin (HSP60) family. Forms a cylinder of 14 subunits composed of two heptameric rings stacked back-to-back. Interacts with the co-chaperonin GroES.

It localises to the cytoplasm. The enzyme catalyses ATP + H2O + a folded polypeptide = ADP + phosphate + an unfolded polypeptide.. Functionally, together with its co-chaperonin GroES, plays an essential role in assisting protein folding. The GroEL-GroES system forms a nano-cage that allows encapsulation of the non-native substrate proteins and provides a physical environment optimized to promote and accelerate protein folding. This Tannerella forsythia (Bacteroides forsythus) protein is Chaperonin GroEL.